Reading from the N-terminus, the 166-residue chain is Bacterial non-heme ferritin (166 aa).

The Ferritin-like diiron domain occupies 2-145 (LSKELLAALN…THIDYLTRIG (144 aa)). Residues glutamate 17, glutamate 50, histidine 53, glutamate 94, and glutamine 127 each contribute to the Fe cation site.

Belongs to the ferritin family. Prokaryotic subfamily.

The protein localises to the cytoplasm. The enzyme catalyses 4 Fe(2+) + O2 + 6 H2O = 4 iron(III) oxide-hydroxide + 12 H(+). In terms of biological role, iron-storage protein. In Staphylococcus epidermidis (strain ATCC 12228 / FDA PCI 1200), this protein is Bacterial non-heme ferritin (ftnA).